The chain runs to 419 residues: Innexin inx5 (419 aa).

Residues 1-21 are Cytoplasmic-facing; the sequence is MFSAVKPLSKYLQFKSIRIYD. Residues 22–42 form a helical membrane-spanning segment; that stretch reads SVFTIHSRCTVVILLTCSLLL. The Extracellular portion of the chain corresponds to 43–162; the sequence is SARQYFGDPI…QTERQYLRYY (120 aa). A helical transmembrane segment spans residues 163–183; the sequence is QWVIILLLFQSFVFYFPSCLW. At 184-238 the chain is on the cytoplasmic side; sequence KVWEGRRLKQLCSEVGDALLSEETYNTRLRMLVKYFTTDYEDMHFCYMAKYVFCE. A helical membrane pass occupies residues 239 to 259; it reads VLNFLISVVNIIVLEVFLNGF. Residues 260–320 lie on the Extracellular side of the membrane; it reads WSKYLRALAT…ILPLNILNEK (61 aa). The chain crosses the membrane as a helical span at residues 321-341; sequence IFVFLWAWFLLMALMSGLNLL. The Cytoplasmic segment spans residues 342-419; that stretch reads CRLAMICSRY…ASGSTLESPV (78 aa).

It belongs to the pannexin family. In terms of tissue distribution, expressed in the cortex of the pupal CNS and at low levels in the wing imaginal disk.

It is found in the cell membrane. Its subcellular location is the cell junction. The protein localises to the gap junction. Its function is as follows. Structural component of the gap junctions. In Drosophila melanogaster (Fruit fly), this protein is Innexin inx5 (Inx5).